A 107-amino-acid chain; its full sequence is Iron-binding protein IscA (107 aa).

Fe cation contacts are provided by C35, C99, and C101.

This sequence belongs to the HesB/IscA family. Homodimer; may form tetramers and higher multimers. Requires Fe cation as cofactor.

Is able to transfer iron-sulfur clusters to apo-ferredoxin. Multiple cycles of [2Fe2S] cluster formation and transfer are observed, suggesting that IscA acts catalytically. Recruits intracellular free iron so as to provide iron for the assembly of transient iron-sulfur cluster in IscU in the presence of IscS, L-cysteine and the thioredoxin reductase system TrxA/TrxB. The protein is Iron-binding protein IscA of Pectobacterium carotovorum subsp. carotovorum (strain PC1).